The chain runs to 344 residues: Isopentenyl-diphosphate delta-isomerase (344 aa).

9-10 (RK) is a substrate binding site. FMN-binding positions include 65 to 67 (AMT), serine 95, and asparagine 124. A substrate-binding site is contributed by glutamine 154. Glutamate 155 is a binding site for Mg(2+). Residues lysine 185, threonine 215, 259-261 (GVR), and 280-281 (SG) each bind FMN.

The protein belongs to the IPP isomerase type 2 family. As to quaternary structure, homooctamer. Dimer of tetramers. It depends on FMN as a cofactor. NADPH serves as cofactor. Mg(2+) is required as a cofactor.

The protein resides in the cytoplasm. It carries out the reaction isopentenyl diphosphate = dimethylallyl diphosphate. In terms of biological role, involved in the biosynthesis of isoprenoids. Catalyzes the 1,3-allylic rearrangement of the homoallylic substrate isopentenyl (IPP) to its allylic isomer, dimethylallyl diphosphate (DMAPP). This is Isopentenyl-diphosphate delta-isomerase from Lacticaseibacillus casei (strain BL23) (Lactobacillus casei).